The following is a 117-amino-acid chain: Transcription elongation factor A protein-like 8 (117 aa).

The segment at 1–82 (MQKSCDENEG…EEVIRGVDEL (82 aa)) is disordered. Residues 41–82 (NVREETEGSHRGEPAEPSPEPKEDTPARHLNPEEVIRGVDEL) are compositionally biased toward basic and acidic residues. A coiled-coil region spans residues 73–100 (EEVIRGVDELERLREEIRRVRNKFVLMH).

This sequence belongs to the TFS-II family. TFA subfamily.

The protein resides in the nucleus. Its function is as follows. May be involved in transcriptional regulation. This chain is Transcription elongation factor A protein-like 8 (Tceal8), found in Mus musculus (Mouse).